Here is a 343-residue protein sequence, read N- to C-terminus: UPF0283 membrane protein blr7254 (343 aa).

Helical transmembrane passes span 64-84 (GALF…LGVV), 97-117 (LGFV…VVIG), and 214-234 (IVTA…VAAL).

The protein belongs to the UPF0283 family.

Its subcellular location is the cell inner membrane. This Bradyrhizobium diazoefficiens (strain JCM 10833 / BCRC 13528 / IAM 13628 / NBRC 14792 / USDA 110) protein is UPF0283 membrane protein blr7254.